The following is a 631-amino-acid chain: Phosphomethylpyrimidine synthase (631 aa).

Substrate is bound by residues asparagine 239, methionine 268, tyrosine 297, histidine 333, 353 to 355, 394 to 397, and glutamate 433; these read SRG and DGLR. Position 437 (histidine 437) interacts with Zn(2+). Substrate is bound at residue tyrosine 460. Histidine 501 is a Zn(2+) binding site. [4Fe-4S] cluster-binding residues include cysteine 581, cysteine 584, and cysteine 589.

It belongs to the ThiC family. As to quaternary structure, homodimer. The cofactor is [4Fe-4S] cluster.

It catalyses the reaction 5-amino-1-(5-phospho-beta-D-ribosyl)imidazole + S-adenosyl-L-methionine = 4-amino-2-methyl-5-(phosphooxymethyl)pyrimidine + CO + 5'-deoxyadenosine + formate + L-methionine + 3 H(+). Its pathway is cofactor biosynthesis; thiamine diphosphate biosynthesis. Functionally, catalyzes the synthesis of the hydroxymethylpyrimidine phosphate (HMP-P) moiety of thiamine from aminoimidazole ribotide (AIR) in a radical S-adenosyl-L-methionine (SAM)-dependent reaction. This chain is Phosphomethylpyrimidine synthase, found in Escherichia coli (strain SMS-3-5 / SECEC).